Here is a 418-residue protein sequence, read N- to C-terminus: Light-independent protochlorophyllide reductase subunit N (418 aa).

[4Fe-4S] cluster is bound by residues Cys17, Cys42, and Cys103.

This sequence belongs to the BchN/ChlN family. In terms of assembly, protochlorophyllide reductase is composed of three subunits; ChlL, ChlN and ChlB. Forms a heterotetramer of two ChlB and two ChlN subunits. Requires [4Fe-4S] cluster as cofactor.

It catalyses the reaction chlorophyllide a + oxidized 2[4Fe-4S]-[ferredoxin] + 2 ADP + 2 phosphate = protochlorophyllide a + reduced 2[4Fe-4S]-[ferredoxin] + 2 ATP + 2 H2O. The protein operates within porphyrin-containing compound metabolism; chlorophyll biosynthesis (light-independent). Its function is as follows. Component of the dark-operative protochlorophyllide reductase (DPOR) that uses Mg-ATP and reduced ferredoxin to reduce ring D of protochlorophyllide (Pchlide) to form chlorophyllide a (Chlide). This reaction is light-independent. The NB-protein (ChlN-ChlB) is the catalytic component of the complex. The chain is Light-independent protochlorophyllide reductase subunit N from Prochlorococcus marinus (strain MIT 9215).